A 404-amino-acid chain; its full sequence is Glucose-1-phosphate adenylyltransferase 2 (404 aa).

Alpha-D-glucose 1-phosphate-binding positions include Tyr-97, Gly-162, 177–178 (EK), and Ser-195.

Belongs to the bacterial/plant glucose-1-phosphate adenylyltransferase family. Homotetramer.

The catalysed reaction is alpha-D-glucose 1-phosphate + ATP + H(+) = ADP-alpha-D-glucose + diphosphate. It functions in the pathway glycan biosynthesis; glycogen biosynthesis. Involved in the biosynthesis of ADP-glucose, a building block required for the elongation reactions to produce glycogen. Catalyzes the reaction between ATP and alpha-D-glucose 1-phosphate (G1P) to produce pyrophosphate and ADP-Glc. In Vibrio vulnificus (strain CMCP6), this protein is Glucose-1-phosphate adenylyltransferase 2.